A 178-amino-acid chain; its full sequence is Arginine repressor (178 aa).

Residues 1–21 are disordered; that stretch reads MSQAQENEHAGPAVPQTRTAR.

It belongs to the ArgR family.

It is found in the cytoplasm. The protein operates within amino-acid biosynthesis; L-arginine biosynthesis [regulation]. In terms of biological role, regulates arginine biosynthesis genes. This is Arginine repressor from Streptomyces avermitilis (strain ATCC 31267 / DSM 46492 / JCM 5070 / NBRC 14893 / NCIMB 12804 / NRRL 8165 / MA-4680).